The following is a 238-amino-acid chain: Sugar fermentation stimulation protein homolog (238 aa).

This sequence belongs to the SfsA family.

In Brucella melitensis biotype 1 (strain ATCC 23456 / CCUG 17765 / NCTC 10094 / 16M), this protein is Sugar fermentation stimulation protein homolog.